Here is a 254-residue protein sequence, read N- to C-terminus: Glucosamine-6-phosphate deaminase (254 aa).

The Proton acceptor; for enolization step role is filled by D67. N136 functions as the For ring-opening step in the catalytic mechanism. H138 acts as the Proton acceptor; for ring-opening step in catalysis. Catalysis depends on E143, which acts as the For ring-opening step.

Belongs to the glucosamine/galactosamine-6-phosphate isomerase family. NagB subfamily.

The enzyme catalyses alpha-D-glucosamine 6-phosphate + H2O = beta-D-fructose 6-phosphate + NH4(+). Its pathway is amino-sugar metabolism; N-acetylneuraminate degradation; D-fructose 6-phosphate from N-acetylneuraminate: step 5/5. Functionally, catalyzes the reversible isomerization-deamination of glucosamine 6-phosphate (GlcN6P) to form fructose 6-phosphate (Fru6P) and ammonium ion. This is Glucosamine-6-phosphate deaminase from Brevibacillus brevis (strain 47 / JCM 6285 / NBRC 100599).